Consider the following 426-residue polypeptide: Serine--tRNA ligase (426 aa).

L-serine is bound at residue 233-235; that stretch reads TSE. Residue 264-266 coordinates ATP; it reads RSE. E287 serves as a coordination point for L-serine. Residue 351-354 participates in ATP binding; sequence EISS. L-serine is bound at residue S387.

Belongs to the class-II aminoacyl-tRNA synthetase family. Type-1 seryl-tRNA synthetase subfamily. Homodimer. The tRNA molecule binds across the dimer.

The protein resides in the cytoplasm. It carries out the reaction tRNA(Ser) + L-serine + ATP = L-seryl-tRNA(Ser) + AMP + diphosphate + H(+). It catalyses the reaction tRNA(Sec) + L-serine + ATP = L-seryl-tRNA(Sec) + AMP + diphosphate + H(+). Its pathway is aminoacyl-tRNA biosynthesis; selenocysteinyl-tRNA(Sec) biosynthesis; L-seryl-tRNA(Sec) from L-serine and tRNA(Sec): step 1/1. Functionally, catalyzes the attachment of serine to tRNA(Ser). Is also able to aminoacylate tRNA(Sec) with serine, to form the misacylated tRNA L-seryl-tRNA(Sec), which will be further converted into selenocysteinyl-tRNA(Sec). The polypeptide is Serine--tRNA ligase (Xylella fastidiosa (strain 9a5c)).